The sequence spans 295 residues: Sulfotransferase 1E1 (295 aa).

3'-phosphoadenylyl sulfate is bound at residue 48 to 53 (KSGSTW). Residue 106 to 108 (KTH) coordinates substrate. The active-site Proton acceptor is the histidine 108. 3'-phosphoadenylyl sulfate contacts are provided by arginine 130 and serine 138. A Phosphoserine modification is found at serine 156. Residues tyrosine 193, 227–232 (TSFQEM), and 257–259 (RKG) each bind 3'-phosphoadenylyl sulfate.

This sequence belongs to the sulfotransferase 1 family. In terms of assembly, homodimer. Liver of young mature males and uterus.

The protein localises to the cytoplasm. The protein resides in the cytosol. The catalysed reaction is estrone + 3'-phosphoadenylyl sulfate = estrone 3-sulfate + adenosine 3',5'-bisphosphate + H(+). It catalyses the reaction (24S)-hydroxycholesterol + 3'-phosphoadenylyl sulfate = (24S)-hydroxycholesterol 3-sulfate + adenosine 3',5'-bisphosphate + H(+). The enzyme catalyses 17beta-estradiol + 3'-phosphoadenylyl sulfate = 17beta-estradiol 3-sulfate + adenosine 3',5'-bisphosphate + H(+). It carries out the reaction 3beta-hydroxyandrost-5-en-17-one + 3'-phosphoadenylyl sulfate = dehydroepiandrosterone 3-sulfate + adenosine 3',5'-bisphosphate + H(+). The catalysed reaction is 4-ethylphenol + 3'-phosphoadenylyl sulfate = 4-ethylphenyl sulfate + adenosine 3',5'-bisphosphate + H(+). Its activity is regulated as follows. Inhibited by estradiol. Functionally, sulfotransferase that utilizes 3'-phospho-5'-adenylyl sulfate (PAPS) as sulfonate donor to catalyze the sulfate conjugation of estradiol and estrone. Is a key enzyme in estrogen homeostasis, the sulfation of estrogens leads to their inactivation. Also sulfates dehydroepiandrosterone (DHEA), pregnenolone, (24S)-hydroxycholesterol and xenobiotic compounds like ethinylestradiol, equalenin, diethyl stilbesterol and 1-naphthol at significantly lower efficiency. Does not sulfonate cortisol, testosterone and dopamine. May play a role in gut microbiota-host metabolic interaction. O-sulfonates 4-ethylphenol (4-EP), a dietary tyrosine-derived metabolite produced by gut bacteria. The product 4-EPS crosses the blood-brain barrier and may negatively regulate oligodendrocyte maturation and myelination, affecting the functional connectivity of different brain regions associated with the limbic system. This Rattus norvegicus (Rat) protein is Sulfotransferase 1E1.